The primary structure comprises 620 residues: LEAF RUST 10 DISEASE-RESISTANCE LOCUS RECEPTOR-LIKE PROTEIN KINASE-like 2.3 (620 aa).

An N-terminal signal peptide occupies residues 1–30 (MDSLSSMGFQTASFFLILLFLFYHLPCVPS). At 31–256 (QQERSRLCKP…NNGTYSDNRP (226 aa)) the chain is on the extracellular side. Asn75, Asn85, Asn93, Asn132, Asn148, Asn162, Asn189, Asn231, and Asn248 each carry an N-linked (GlcNAc...) asparagine glycan. A helical transmembrane segment spans residues 257–277 (FLVTIGTVLGSILCVCVVLFL). Over 278 to 620 (AFYLNERRIA…SVESSIYSEV (343 aa)) the chain is Cytoplasmic. The region spanning 314-596 (KSFTEVVGRG…SLDPPPKPLL (283 aa)) is the Protein kinase domain. ATP contacts are provided by residues 320 to 328 (VGRGGFGTV) and Lys342. Asp431 (proton acceptor) is an active-site residue. Residues 586-620 (DSLDPPPKPLLHMPMQNNNAESSQLSVESSIYSEV) are disordered. A compositionally biased stretch (polar residues) spans 600-620 (MQNNNAESSQLSVESSIYSEV).

The protein belongs to the protein kinase superfamily. Ser/Thr protein kinase family.

Its subcellular location is the membrane. The enzyme catalyses L-seryl-[protein] + ATP = O-phospho-L-seryl-[protein] + ADP + H(+). The catalysed reaction is L-threonyl-[protein] + ATP = O-phospho-L-threonyl-[protein] + ADP + H(+). This is LEAF RUST 10 DISEASE-RESISTANCE LOCUS RECEPTOR-LIKE PROTEIN KINASE-like 2.3 from Arabidopsis thaliana (Mouse-ear cress).